A 237-amino-acid chain; its full sequence is RING finger protein vilya (237 aa).

The segment at 21–69 (CNSCCALFCDKKHTFFLLACHHVFCERCVKVSAGRTPSDAPIFECSTCR) adopts an RING-type zinc-finger fold. The disordered stretch occupies residues 172–237 (MHRMAQAYRS…IHPPNNSFDL (66 aa)). The span at 180 to 195 (RSRSLTSQSSSSAQRS) shows a compositional bias: low complexity. Positions 221–237 (RQQITSFIHPPNNSFDL) are enriched in polar residues.

May interact with itself and with narya and nenya through their RING-type zinc fingers. In terms of tissue distribution, expressed in nurse cell and pro-oocytes (at protein level).

The protein resides in the chromosome. In terms of biological role, required for the formation of DNA double-strand breaks during meiosis together with narya and nenya. The polypeptide is RING finger protein vilya (Drosophila melanogaster (Fruit fly)).